The primary structure comprises 1040 residues: MQESSPIHGGGPSRLFILRPVATTLLMVAILLAGLVGYRALPVSALPEVDYPTIQVVTLYPGASPDVMTSSVTAPLEHQFGSMSGLKQMSSQSSAGASVITLQFQLTLSLDVAEQDVQAAINAATNLLPTDLPFPPTYNKVNPADPPIMTLAVTSTAMPMTQVQDMLETRIAQKISQVEGVGLVTLAGGQRPSVRVKLNAGALASFGLSSESVRTAITAANVNTPKGSFDGPTRSVTLSANDQIRSVDDYRQLIITWKNNAPVRLQDVATVEQAPENTKLAAWANQNQAIILNIQRQPGANVIATADHIRNLLPTLQASLPKSVNVTLLADRTTTIRASVDDVQFELLLAIALVVMVIYLFLRNAVATLIPSIAVPLSLVGTFAAMYFLGFSVNNLTLMALTIATGFVVDDAIVVIENIARYIEKGEKPLDAALKGAGEIGFTIISLTFSLIAVLIPLLFMGDIIGRLFREFAVTLAVSILISAIVSLTLTPMMCARLLNHEALAHQNRFTRASERFFDWVIAAYGRGLTRVLSHPWITLSVAIGTLVLTVLLYIVIPKGFFPIQDNGIIQGTVQAAQTISFNSMVDKQHQVTDAILKDPTVESVSSFIGVDGTNPSLNSGRLQINLKPFSERSERVQTIIDRLQQQAAAIPGVQLYLQPVQDLTIDTQVSRTQYQFTLQTMSLDELGVWVPKLTAELQKLPQLQDVSSDWQDGAAVAYVKVDRDNASRLGITMSQIDSALYNAFGQRLISTIYTQSNQYRVVLEQHSPNKTGLDPLHDIRLVNSTGGVVPLDSIATIEERNGTLAVNHIDQFPSSTISFNVAPGYALGDAVKAIETTQQQMQLPSDIITRFQGSTLAFQAALTSTIWLVVAAIVAMYIVLGVLYESFIHPVTILSTLPTAGVGALLALMISGSDLNIIAIIGIILLIGIVKKNAIMMIDFALAAEREHGMSPYQAIYQACLLRFRPILMTTMAALLSAVPLMFSTGVGAELRRPLGICMVGGLVMSQVLTLFTTPVIYLLFDRLAHRLRRPRPQEGEAQ.

Helical transmembrane passes span 16–36 (FILR…AGLV), 342–362 (DVQF…YLFL), 373–393 (IAVP…GFSV), 396–416 (LTLM…IVVI), 440–460 (IGFT…PLLF), 472–492 (FAVT…TLTP), 537–557 (WITL…YIVI), 865–885 (STIW…GVLY), 888–908 (FIHP…ALLA), 911–931 (ISGS…IGIV), 968–988 (ILMT…STGV), and 1002–1022 (GGLV…YLLF).

The protein belongs to the resistance-nodulation-cell division (RND) (TC 2.A.6) family. MdtB subfamily. Part of a tripartite efflux system composed of MdtA, MdtB and MdtC. MdtB forms a heteromultimer with MdtC.

The protein resides in the cell inner membrane. The chain is Multidrug resistance protein MdtB from Musicola paradisiaca (strain Ech703) (Dickeya paradisiaca).